The primary structure comprises 211 residues: Redox-sensing transcriptional repressor Rex (211 aa).

The H-T-H motif DNA-binding region spans 13–52; that stretch reads TYLRILEELEAQGVHRTSSEQLGELAQVTAFQVRKDLSYF. An NAD(+)-binding site is contributed by 87–92; the sequence is GMGRLG.

This sequence belongs to the transcriptional regulatory Rex family. As to quaternary structure, homodimer.

Its subcellular location is the cytoplasm. Its function is as follows. Modulates transcription in response to changes in cellular NADH/NAD(+) redox state. The polypeptide is Redox-sensing transcriptional repressor Rex (Thermus aquaticus).